We begin with the raw amino-acid sequence, 237 residues long: Cysteine-rich venom protein ENH2 (237 aa).

The N-terminal stretch at 1–18 is a signal peptide; sequence MIVFILLSLAAVLQQFVA. The 129-residue stretch at 37–165 folds into the SCP domain; the sequence is VDMHNSFRRS…PYNYFYVCQY (129 aa). 7 cysteine pairs are disulfide-bonded: C74–C152, C91–C166, C147–C163, C185–C192, C188–C197, C210–C228, and C219–C232. The region spanning 201 to 237 is the ShKT domain; that stretch reads CPITNTFTNCDSLLQQNSCEDSYIKTNCGASCFGQDK.

This sequence belongs to the CRISP family. In terms of tissue distribution, expressed by the venom gland.

It is found in the secreted. Its function is as follows. Blocks contraction of smooth muscle elicited by high potassium-induced depolarization, but does not block caffeine-stimulated contraction. May target voltage-gated calcium channels on smooth muscle. In Pseudoferania polylepis (Macleay's water snake), this protein is Cysteine-rich venom protein ENH2.